We begin with the raw amino-acid sequence, 914 residues long: MNSPDEHNGRRRFLQFSAAALASAAASPSLWAFSKIQPIEDPLKDYPYRDWEDLYRKEWTWDSVGVMTHSNGCVAGCAWNVFVKNGIPMREEQISKYPQLPGIPDMNPRGCQKGAVYCSWSKQPDHIKWPLKRVGERGERKWKRISWDEALTEIADKIIDTTVKRGPGNIYIPKRPFAVITNTAYTRMTKLLGAISPDATSMTGDLYTGIQTVRVPASTVSTFDDWFTSDLILMWHKNPIVTRIPDAHFLMEARYNGARLVNISADYNPSSIHSDLFVPVTSGTDSHLAAALVNVLIAGKHYKADYLKEQTALPFLVRTDNGKFLREKDFKADGSDQVFYVWDTKAGKAVLAPGSMGSKDKTLKLGTIDPALEGNFETHGIKVTTVFERLKAEITPYTPEATQATTGVHPSVVRQLAGWIAECKALRILDGYNNQKHFDGFQCGRLKILILTLIGHHGTTGSIDTTFEGWRLEGNSELGTVKGKPGRSVSAVLAQWVWGEQYQRSKDYFNDAQLREELGFGVDEMESMRKESEANGWMPNWQSIKEPVVSITGGINMFATSNGYQHLRDNFLKRCELNVVVDFRLNSGAMYADIVLPAAENTEKLDIRETSVTRFIHAFGQPVKPMYERKTDWQIMVALAAKIQERAKARGIARVDDPEIKSGIDFDKIYDEFTMNGKVVTDEQAVRFVMDNSKALGPGTYEEVMKNGFVAVGPSAGKTGPVPKDKPYRPFTVNVTDKKPYGTLTGRLQFYVDHDWFQRLGATVPKPQYRGGVLGPKKYPFVRNSPHARWGVHSFARTEQWMLRHQRGEPDVRMSPKAMAAKGIKDGDMVRIFNDSGEFFAVVKAMPALPDNMLFTEHGWEQYQYKNMTHYNMVSSELINPLELVGGYGHIKYTSGGFNPNRIFYETTVDVEKA.

A signal peptide (tat-type signal) is located at residues 1 to 32 (MNSPDEHNGRRRFLQFSAAALASAAASPSLWA). The region spanning 62–125 (DSVGVMTHSN…VYCSWSKQPD (64 aa)) is the 4Fe-4S Mo/W bis-MGD-type domain. 4 residues coordinate [4Fe-4S] cluster: histidine 69, cysteine 73, cysteine 77, and cysteine 111. A Mo-bis(molybdopterin guanine dinucleotide)-binding site is contributed by aspartate 205.

This sequence belongs to the prokaryotic molybdopterin-containing oxidoreductase family. As to quaternary structure, heterotrimer of alpha, beta and gamma subunits. [4Fe-4S] cluster serves as cofactor. It depends on Mo-bis(molybdopterin guanine dinucleotide) as a cofactor. In terms of processing, predicted to be exported by the Tat system. The position of the signal peptide cleavage has not been experimentally proven.

Its subcellular location is the periplasm. The enzyme catalyses chlorate + AH2 = chlorite + A + H2O. Terminal reductase that allows anaerobic growth on chlorate as the sole respiratory oxidant. The polypeptide is Chlorate reductase subunit alpha (clrA) (Ideonella dechloratans).